The sequence spans 282 residues: HTH-type transcriptional activator RhaR (282 aa).

One can recognise an HTH araC/xylS-type domain in the interval 179–277; that stretch reads DKLITALANS…GMTPSQWRHL (99 aa). 2 DNA-binding regions (H-T-H motif) span residues 196-217 and 244-267; these read DAFCQQEQCSERVLRQQFRAQT and VSEISMQCGFEDSNYFSVVFTRET.

Binds DNA as a dimer.

Its subcellular location is the cytoplasm. Its function is as follows. Activates expression of the rhaSR operon in response to L-rhamnose. In Salmonella choleraesuis (strain SC-B67), this protein is HTH-type transcriptional activator RhaR.